Reading from the N-terminus, the 687-residue chain is Glycine--tRNA ligase beta subunit (687 aa).

It belongs to the class-II aminoacyl-tRNA synthetase family. In terms of assembly, tetramer of two alpha and two beta subunits.

It is found in the cytoplasm. The enzyme catalyses tRNA(Gly) + glycine + ATP = glycyl-tRNA(Gly) + AMP + diphosphate. The sequence is that of Glycine--tRNA ligase beta subunit from Neisseria meningitidis serogroup C / serotype 2a (strain ATCC 700532 / DSM 15464 / FAM18).